Here is a 223-residue protein sequence, read N- to C-terminus: Twisted gastrulation protein homolog 1 (223 aa).

The N-terminal stretch at 1 to 25 (MKLHYVAVLTLAILMFLTWLPESLS) is a signal peptide. Residues N52 and N81 are each glycosylated (N-linked (GlcNAc...) asparagine).

It belongs to the twisted gastrulation protein family. As to quaternary structure, interacts with CHRD and BMP4. This interaction enhances CHRD/BMP4 complex formation. Interacts with BMP7.

The protein localises to the secreted. Functionally, may be involved in dorsoventral axis formation. Seems to antagonize BMP signaling by forming ternary complexes with CHRD and BMPs, thereby preventing BMPs from binding to their receptors. In addition to the anti-BMP function, also has pro-BMP activity, partly mediated by cleavage and degradation of CHRD, which releases BMPs from ternary complexes. May be an important modulator of BMP-regulated cartilage development and chondrocyte differentiation. May play a role in thymocyte development. In Homo sapiens (Human), this protein is Twisted gastrulation protein homolog 1 (TWSG1).